Consider the following 100-residue polypeptide: NADH-quinone oxidoreductase subunit K (100 aa).

3 helical membrane passes run 2–22, 29–49, and 60–80; these read IGLT…LVGI, IMLF…LAAI, and IIAF…LGLL.

It belongs to the complex I subunit 4L family. In terms of assembly, NDH-1 is composed of 14 different subunits. Subunits NuoA, H, J, K, L, M, N constitute the membrane sector of the complex.

Its subcellular location is the cell inner membrane. It catalyses the reaction a quinone + NADH + 5 H(+)(in) = a quinol + NAD(+) + 4 H(+)(out). In terms of biological role, NDH-1 shuttles electrons from NADH, via FMN and iron-sulfur (Fe-S) centers, to quinones in the respiratory chain. The immediate electron acceptor for the enzyme in this species is believed to be ubiquinone. Couples the redox reaction to proton translocation (for every two electrons transferred, four hydrogen ions are translocated across the cytoplasmic membrane), and thus conserves the redox energy in a proton gradient. The polypeptide is NADH-quinone oxidoreductase subunit K (Campylobacter concisus (strain 13826)).